The following is a 151-amino-acid chain: Transcriptional regulator MraZ (151 aa).

2 consecutive SpoVT-AbrB domains span residues 5-52 (ANAV…PLDE) and 81-124 (AVDL…DEDA).

Belongs to the MraZ family. In terms of assembly, forms oligomers.

The protein localises to the cytoplasm. Its subcellular location is the nucleoid. In Pseudomonas putida (strain W619), this protein is Transcriptional regulator MraZ.